The following is a 198-amino-acid chain: MRLSTVLLGSLLGALTQAAPTGQFPGHYQSSPPPLGPSNWERNPVSVFFKVLNTQPDPDYTMLKELVTYDCTYVSLTFDNPTLHSIMPWAGTHTNIGPQAFIDIFTRVGLYWDRGPFTIDYIFGDGGNVTAWGSFTATSRTLGKTVISPWAARARVNEDNRIFYFQWMEDTFTTASSFGSDASNKTYVSNPQGGTTVA.

Residues 1–18 (MRLSTVLLGSLLGALTQA) form the signal peptide. N-linked (GlcNAc...) asparagine glycans are attached at residues asparagine 128 and asparagine 184.

Belongs to the patF family.

It is found in the cytoplasm. It localises to the cytosol. It carries out the reaction phyllostine = neopatulin. The protein operates within mycotoxin biosynthesis; patulin biosynthesis. Part of the gene cluster that mediates the biosynthesis of patulin, an acetate-derived tetraketide mycotoxin produced by several fungal species that shows antimicrobial properties against several bacteria. PatF catalyzes the conversion of phyllostine into neopatulin. The pathway begins with the synthesis of 6-methylsalicylic acid by the polyketide synthase (PKS) patK via condensation of acetate and malonate units. The 6-methylsalicylic acid decarboxylase patG then catalyzes the decarboxylation of 6-methylsalicylic acid to yield m-cresol (also known as 3-methylphenol). These first reactions occur in the cytosol. The intermediate m-cresol is then transported into the endoplasmic reticulum where the cytochrome P450 monooxygenase patH converts it to m-hydroxybenzyl alcohol, which is further converted to gentisyl alcohol by the cytochrome P450 monooxygenase patI. The oxidoreductases patJ and patO further convert gentisyl alcohol to isoepoxydon in the vacuole. PatN catalyzes then the transformation of isoepoxydon into phyllostine. The cluster protein patF is responsible for the conversion from phyllostine to neopatulin whereas the alcohol dehydrogenase patD converts neopatulin to E-ascladiol. The steps between isoepoxydon and E-ascladiol occur in the cytosol, and E-ascladiol is probably secreted to the extracellular space by one of the cluster-specific transporters patC or patM. Finally, the secreted patulin synthase patE catalyzes the conversion of E-ascladiol to patulin. The polypeptide is Patulin synthesis protein F (Aspergillus clavatus (strain ATCC 1007 / CBS 513.65 / DSM 816 / NCTC 3887 / NRRL 1 / QM 1276 / 107)).